Here is a 147-residue protein sequence, read N- to C-terminus: SsrA-binding protein (147 aa).

The disordered stretch occupies residues 124–147 (KKHDKRQDIKDRDWARKQARQDFS). The span at 128-147 (KRQDIKDRDWARKQARQDFS) shows a compositional bias: basic and acidic residues.

It belongs to the SmpB family.

The protein localises to the cytoplasm. Required for rescue of stalled ribosomes mediated by trans-translation. Binds to transfer-messenger RNA (tmRNA), required for stable association of tmRNA with ribosomes. tmRNA and SmpB together mimic tRNA shape, replacing the anticodon stem-loop with SmpB. tmRNA is encoded by the ssrA gene; the 2 termini fold to resemble tRNA(Ala) and it encodes a 'tag peptide', a short internal open reading frame. During trans-translation Ala-aminoacylated tmRNA acts like a tRNA, entering the A-site of stalled ribosomes, displacing the stalled mRNA. The ribosome then switches to translate the ORF on the tmRNA; the nascent peptide is terminated with the 'tag peptide' encoded by the tmRNA and targeted for degradation. The ribosome is freed to recommence translation, which seems to be the essential function of trans-translation. The sequence is that of SsrA-binding protein from Neorickettsia sennetsu (strain ATCC VR-367 / Miyayama) (Ehrlichia sennetsu).